A 629-amino-acid polypeptide reads, in one-letter code: UvrABC system protein C (629 aa).

Residues 12 to 91 (DRPGCYLFKD…IKKHKPKYNI (80 aa)) form the GIY-YIG domain. In terms of domain architecture, UVR spans 200–235 (QEVLERLRARMEQAAERLEFERAAELRDQIRAIEKV).

This sequence belongs to the UvrC family. In terms of assembly, interacts with UvrB in an incision complex.

The protein localises to the cytoplasm. In terms of biological role, the UvrABC repair system catalyzes the recognition and processing of DNA lesions. UvrC both incises the 5' and 3' sides of the lesion. The N-terminal half is responsible for the 3' incision and the C-terminal half is responsible for the 5' incision. The protein is UvrABC system protein C of Symbiobacterium thermophilum (strain DSM 24528 / JCM 14929 / IAM 14863 / T).